The chain runs to 658 residues: Biosynthetic arginine decarboxylase (658 aa).

Lys-127 carries the post-translational modification N6-(pyridoxal phosphate)lysine. A substrate-binding site is contributed by 307–317 (FDVGGGLGVDY).

The protein belongs to the Orn/Lys/Arg decarboxylase class-II family. SpeA subfamily. Homotetramer. The cofactor is pyridoxal 5'-phosphate. Mg(2+) serves as cofactor. In terms of processing, processed post-translationally to a 70 kDa mature form. Post-translationally, the N-terminus is blocked.

The protein localises to the periplasm. It carries out the reaction L-arginine + H(+) = agmatine + CO2. Its pathway is amine and polyamine biosynthesis; agmatine biosynthesis; agmatine from L-arginine: step 1/1. Down-regulated by polyamine end products putrescine and spermidine. Functionally, catalyzes the biosynthesis of agmatine from arginine. The polypeptide is Biosynthetic arginine decarboxylase (speA) (Escherichia coli (strain K12)).